A 225-amino-acid polypeptide reads, in one-letter code: NAD(P)H-quinone oxidoreductase subunit K, chloroplastic (225 aa).

4 residues coordinate [4Fe-4S] cluster: Cys43, Cys44, Cys108, and Cys139.

This sequence belongs to the complex I 20 kDa subunit family. NDH is composed of at least 16 different subunits, 5 of which are encoded in the nucleus. The cofactor is [4Fe-4S] cluster.

It localises to the plastid. The protein localises to the chloroplast thylakoid membrane. It carries out the reaction a plastoquinone + NADH + (n+1) H(+)(in) = a plastoquinol + NAD(+) + n H(+)(out). It catalyses the reaction a plastoquinone + NADPH + (n+1) H(+)(in) = a plastoquinol + NADP(+) + n H(+)(out). Its function is as follows. NDH shuttles electrons from NAD(P)H:plastoquinone, via FMN and iron-sulfur (Fe-S) centers, to quinones in the photosynthetic chain and possibly in a chloroplast respiratory chain. The immediate electron acceptor for the enzyme in this species is believed to be plastoquinone. Couples the redox reaction to proton translocation, and thus conserves the redox energy in a proton gradient. The sequence is that of NAD(P)H-quinone oxidoreductase subunit K, chloroplastic from Guizotia abyssinica (Niger).